Here is a 360-residue protein sequence, read N- to C-terminus: Phenylalanine--tRNA ligase alpha subunit (360 aa).

Glu260 is a Mg(2+) binding site.

This sequence belongs to the class-II aminoacyl-tRNA synthetase family. Phe-tRNA synthetase alpha subunit type 1 subfamily. In terms of assembly, tetramer of two alpha and two beta subunits. It depends on Mg(2+) as a cofactor.

The protein localises to the cytoplasm. It carries out the reaction tRNA(Phe) + L-phenylalanine + ATP = L-phenylalanyl-tRNA(Phe) + AMP + diphosphate + H(+). The protein is Phenylalanine--tRNA ligase alpha subunit of Rhizobium rhizogenes (strain K84 / ATCC BAA-868) (Agrobacterium radiobacter).